Consider the following 589-residue polypeptide: Leucine-rich repeat and immunoglobulin-like domain-containing nogo receptor-interacting protein 3 (589 aa).

An N-terminal signal peptide occupies residues 1 to 23 (MTCWLHMLGLHLLLLPTAPLAAG). Residues 24–53 (CPARCECSASTRTVACGRRRLTAIPEGIPA) form the LRRNT domain. Topologically, residues 24–528 (CPARCECSAS…LDLTTILVST (505 aa)) are extracellular. LRR repeat units follow at residues 54-75 (ETRMLELSRNRIRCLNPGDLAS), 78-99 (TLEELDLNHNVIAHVEPGAFAN), 102-123 (RLRVLRLRGNQLKLIPPGVFTH), 126-147 (SLTLLDLSENKLVILLDFSFQD), 150-171 (SLQRLEVGDNDLVFISRRAFAG), 174-195 (GLAELTLERCNLTSLSPESLGH), 206-227 (HLAIAALEDQNFQKLPGLSHLE), 246-267 (NLTSLSITHTNITAVPAAALRQ), 270-291 (HLTCLNLSHNPISMVPRGSFRD), 294-315 (RLRELHLAGALLAVIEPQAFVG), and 318-339 (QIRLLNLSDNLLSTLEENTFHS). N-linked (GlcNAc...) asparagine glycosylation is present at N184. Residues N246, N256, and N275 are each glycosylated (N-linked (GlcNAc...) asparagine). N323 carries an N-linked (GlcNAc...) asparagine glycan. Residues 351 to 405 (NPLACDCRLLWIVQRRKTLNFDGRLPACATPAEVRGDALHNLPDSVLFEYFVCRK) form the LRRCT domain. An Ig-like C2-type domain is found at 406 to 495 (PKIRERRLQH…GNDTYFATLT (90 aa)). A disulfide bridge links C428 with C479. N487, N501, and N509 each carry an N-linked (GlcNAc...) asparagine glycan. The chain crosses the membrane as a helical span at residues 529-549 (AMGCITFLGVVLFCFLLLFVW). Residues 550–589 (SRGRGQHKNNFSVEYSFRKVDGPAAAAGQGGARKFNMKMI) lie on the Cytoplasmic side of the membrane.

The protein localises to the membrane. This is Leucine-rich repeat and immunoglobulin-like domain-containing nogo receptor-interacting protein 3 (Lingo3) from Mus musculus (Mouse).